A 175-amino-acid chain; its full sequence is Translation initiation factor IF-3 (175 aa).

This sequence belongs to the IF-3 family. As to quaternary structure, monomer.

It localises to the cytoplasm. Functionally, IF-3 binds to the 30S ribosomal subunit and shifts the equilibrium between 70S ribosomes and their 50S and 30S subunits in favor of the free subunits, thus enhancing the availability of 30S subunits on which protein synthesis initiation begins. The polypeptide is Translation initiation factor IF-3 (Staphylococcus aureus (strain USA300)).